Consider the following 405-residue polypeptide: uncharacterized protein (405 aa).

Disordered stretches follow at residues 1 to 21, 150 to 179, and 285 to 405; these read MSKK…ESKT, IKDE…QEGP, and DDED…KSRS. The span at 7-16 shows a compositional bias: polar residues; sequence KNASPKNNSD. Acidic residues-rich tracts occupy residues 312 to 331 and 349 to 358; these read SDDE…DDEE and DDEDDEEEGE. Basic residues-rich tracts occupy residues 365–374 and 390–405; these read SSKKSSKKAS and PKKK…KSRS.

This is an uncharacterized protein from Acanthamoeba polyphaga (Amoeba).